Here is a 339-residue protein sequence, read N- to C-terminus: Transcription initiation factor IIB (339 aa).

The TFIIB-type zinc-finger motif lies at 39 to 70 (EELICPMCGSKNIIKDYERAEIVCETCGCVLQ). Zn(2+) is bound by residues cysteine 43, cysteine 46, cysteine 62, and cysteine 65. 2 repeat units span residues 156–239 (SELD…SREL) and 250–331 (DYVP…ELTE).

Belongs to the TFIIB family.

Its function is as follows. Stabilizes TBP binding to an archaeal box-A promoter. Also responsible for recruiting RNA polymerase II to the pre-initiation complex (DNA-TBP-TFIIB). This is Transcription initiation factor IIB from Methanothermococcus thermolithotrophicus (Methanococcus thermolithotrophicus).